The chain runs to 427 residues: Serine hydroxymethyltransferase (427 aa).

(6S)-5,6,7,8-tetrahydrofolate contacts are provided by residues Leu-122 and 126-128 (GHL). Lys-231 is subject to N6-(pyridoxal phosphate)lysine. A (6S)-5,6,7,8-tetrahydrofolate-binding site is contributed by 355 to 357 (SPF).

Belongs to the SHMT family. Homodimer. The cofactor is pyridoxal 5'-phosphate.

It localises to the cytoplasm. The enzyme catalyses (6R)-5,10-methylene-5,6,7,8-tetrahydrofolate + glycine + H2O = (6S)-5,6,7,8-tetrahydrofolate + L-serine. Its pathway is one-carbon metabolism; tetrahydrofolate interconversion. It participates in amino-acid biosynthesis; glycine biosynthesis; glycine from L-serine: step 1/1. Catalyzes the reversible interconversion of serine and glycine with tetrahydrofolate (THF) serving as the one-carbon carrier. This reaction serves as the major source of one-carbon groups required for the biosynthesis of purines, thymidylate, methionine, and other important biomolecules. Also exhibits THF-independent aldolase activity toward beta-hydroxyamino acids, producing glycine and aldehydes, via a retro-aldol mechanism. This Synechococcus sp. (strain ATCC 27144 / PCC 6301 / SAUG 1402/1) (Anacystis nidulans) protein is Serine hydroxymethyltransferase.